A 447-amino-acid chain; its full sequence is Acyl-CoA (8-3)-desaturase (447 aa).

Residue Met1 is modified to N-acetylmethionine. Residues 1 to 124 lie on the Cytoplasmic side of the membrane; that stretch reads MAPDPVPTPG…FRELRATVER (124 aa). In terms of domain architecture, Cytochrome b5 heme-binding spans 19–97; the sequence is TRYFTWEEVA…MNSLLIGELA (79 aa). The chain crosses the membrane as a helical span at residues 125-145; sequence MGLMKANHLFFLVYLLHILLL. The Lumenal portion of the chain corresponds to 146–160; sequence DVAAWLTLWIFGTSL. Residues 161–180 traverse the membrane as a helical segment; it reads VPFILCAVLLSTVQAQAGWL. The Cytoplasmic portion of the chain corresponds to 181–268; that stretch reads QHDFGHLSVF…HMPYNHQHKY (88 aa). Positions 182–186 match the Histidine box-1 motif; the sequence is HDFGH. Residues 219–223 carry the Histidine box-2 motif; the sequence is HFQHH. The helical transmembrane segment at 269-289 threads the bilayer; that stretch reads FFLIGPPALLPLYFQWYIFYF. The Lumenal portion of the chain corresponds to 290 to 308; sequence VVQRKKWVDLAWMLSFYAR. A helical membrane pass occupies residues 309–329; the sequence is IFFTYMPLLGLKGFLGLFFIV. The Cytoplasmic portion of the chain corresponds to 330–447; the sequence is RFLESNWFVW…QLWLDAYLHQ (118 aa). A Histidine box-3 motif is present at residues 385–389; the sequence is QIEHH.

This sequence belongs to the fatty acid desaturase type 1 family. As to expression, highly expressed in the adrenal gland, liver, brain, and testis, tissues where lipogenesis and steroidogenesis are active. Expressed in colonic mucosa.

The protein resides in the endoplasmic reticulum membrane. It localises to the mitochondrion. It catalyses the reaction (8Z,11Z,14Z)-eicosatrienoyl-CoA + 2 Fe(II)-[cytochrome b5] + O2 + 2 H(+) = (5Z,8Z,11Z,14Z)-eicosatetraenoyl-CoA + 2 Fe(III)-[cytochrome b5] + 2 H2O. It carries out the reaction (8Z,11Z,14Z,17Z)-eicosatetraenoyl-CoA + 2 Fe(II)-[cytochrome b5] + O2 + 2 H(+) = (5Z,8Z,11Z,14Z,17Z)-eicosapentaenoyl-CoA + 2 Fe(III)-[cytochrome b5] + 2 H2O. The catalysed reaction is (11E)-octadecenoyl-CoA + 2 Fe(II)-[cytochrome b5] + O2 + 2 H(+) = (5Z,11E)-octadecadienoyl-CoA + 2 Fe(III)-[cytochrome b5] + 2 H2O. It participates in lipid metabolism; polyunsaturated fatty acid biosynthesis. Its function is as follows. Acts as a front-end fatty acyl-coenzyme A (CoA) desaturase that introduces a cis double bond at carbon 5 located between a preexisting double bond and the carboxyl end of the fatty acyl chain. Involved in biosynthesis of highly unsaturated fatty acids (HUFA) from the essential polyunsaturated fatty acids (PUFA) linoleic acid (LA) (18:2n-6) and alpha-linolenic acid (ALA) (18:3n-3) precursors. Specifically, desaturates dihomo-gamma-linoleoate (DGLA) (20:3n-6) and eicosatetraenoate (ETA) (20:4n-3) to generate arachidonate (AA) (20:4n-6) and eicosapentaenoate (EPA) (20:5n-3), respectively. As a rate limiting enzyme for DGLA (20:3n-6) and AA (20:4n-6)-derived eicosanoid biosynthesis, controls the metabolism of inflammatory lipids like prostaglandin E2, critical for efficient acute inflammatory response and maintenance of epithelium homeostasis. Contributes to membrane phospholipid biosynthesis by providing AA (20:4n-6) as a major acyl chain esterified into phospholipids. In particular, regulates phosphatidylinositol-4,5-bisphosphate levels, modulating inflammatory cytokine production in T-cells. Also desaturates (11E)-octadecenoate (trans-vaccenoate)(18:1n-9), a metabolite in the biohydrogenation pathway of LA (18:2n-6). In Mus musculus (Mouse), this protein is Acyl-CoA (8-3)-desaturase.